A 234-amino-acid chain; its full sequence is Transcription factor UDT1 (234 aa).

The interval 1-51 (MPRRARARGGGGGGGEEVKVEDDFIDSVLNFGGGGGGEEDGDDGEEEQQQQ) is disordered. Residues 37–48 (GEEDGDDGEEEQ) are compositionally biased toward acidic residues. Residues 61–74 (EFKSKNLEAERRRR) form a basic motif; degenerate region. Residues 61–110 (EFKSKNLEAERRRRGRLNGNIFALRAVVPKITKMSKEATLSDAIEHIKNL) form the bHLH domain. A helix-loop-helix motif region spans residues 75–110 (GRLNGNIFALRAVVPKITKMSKEATLSDAIEHIKNL).

It belongs to the bHLH protein family.

It localises to the nucleus. Functionally, transcription factor that plays a crucial role in tapetum development. Required for male fertility and pollen differentiation within the developing anther. Plays a major role in maintaining tapetum development, starting in early meiosis. Required for pollen mother cell meiosis. May regulate the anther-specific cysteine protease CP1 and lipid-transfer proteins C4 and C6. Required for anther development. Functions in parallel with GAMYB to regulate early anther development. Functions upstream of the transcription factor TDR and may positively regulate its transcription. In Oryza sativa subsp. japonica (Rice), this protein is Transcription factor UDT1.